Here is a 427-residue protein sequence, read N- to C-terminus: Tyrosine--tRNA ligase (427 aa).

Residue tyrosine 39 participates in L-tyrosine binding. Residues 44 to 53 carry the 'HIGH' region motif; that stretch reads PTSDSLHIGH. L-tyrosine contacts are provided by tyrosine 178 and glutamine 182. The short motif at 238-242 is the 'KMSKS' region element; sequence KFGKT. Lysine 241 lines the ATP pocket. In terms of domain architecture, S4 RNA-binding spans 360-417; sequence ITLQQALVESKLVVSRAQARELISSNSITVNSKKQLKTEYIFCATDRLYNRFTLLRRG.

Belongs to the class-I aminoacyl-tRNA synthetase family. TyrS type 1 subfamily. Homodimer.

Its subcellular location is the cytoplasm. The enzyme catalyses tRNA(Tyr) + L-tyrosine + ATP = L-tyrosyl-tRNA(Tyr) + AMP + diphosphate + H(+). Catalyzes the attachment of tyrosine to tRNA(Tyr) in a two-step reaction: tyrosine is first activated by ATP to form Tyr-AMP and then transferred to the acceptor end of tRNA(Tyr). This is Tyrosine--tRNA ligase from Blochmanniella pennsylvanica (strain BPEN).